We begin with the raw amino-acid sequence, 858 residues long: Volume-regulated anion channel subunit LRRC8D (858 aa).

Residues 1 to 22 (MFTLAEVASLNDIQPTYRILKP) are Cytoplasmic-facing. A helical membrane pass occupies residues 23–48 (WWDVFMDYLAVVMLMVAIFAGTMQLT). Residues 49–163 (KDQVVCLPVL…YHLALPWYSK (115 aa)) lie on the Extracellular side of the membrane. C54 and C354 are joined by a disulfide. Residues 118-137 (AESTFPSQETKKEKRDPTGR) are disordered. The segment covering 126–137 (ETKKEKRDPTGR) has biased composition (basic and acidic residues). A helical membrane pass occupies residues 164 to 182 (YFPYLALIHTIILMVSSNF). Residues 183–308 (WFKYPKTCSK…EDSDLIYKLY (126 aa)) are Cytoplasmic-facing. A disordered region spans residues 221 to 251 (SEENKQRITGAQTLPKHVSTSSDEGSPSAST). A compositionally biased stretch (polar residues) spans 227–251 (RITGAQTLPKHVSTSSDEGSPSAST). Residues S241, S242, and S246 each carry the phosphoserine modification. A helical membrane pass occupies residues 309–330 (VVQTLIKTAKFIFILCYTANFV). Residues 331-360 (NAISFEHVCKPKVEHLTGYEVFECTHNMAY) lie on the Extracellular side of the membrane. The helical transmembrane segment at 361 to 386 (MLKKLLISYISIICVYGFICLYTLFW) threads the bilayer. At 387-858 (LFRIPLKEYS…DVNVPFANGI (472 aa)) the chain is on the cytoplasmic side. 13 LRR repeats span residues 514-534 (NLQELHLCHCPAKVEQTAFSF), 538-559 (HLRCLHVKFTDVAEIPAWVYLL), 561-582 (NLRELYLIGNLNSENNKMIGLE), 589-609 (HLKILHVKSNLTKVPSNITDV), 612-632 (HLTKLVIHNDGTKLLVLNSLK), 636-657 (NVAELELQNCELERIPHAIFSL), 659-680 (NLQELDLKSNSIRTIEEIISFQ), 684-705 (RLTCLKLWHNKIVAIPPSITHV), 707-728 (NLESLYFSNNKLESLPVAVFSL), 730-751 (KLRCLDVSYNNISTIPIEIGLL), 753-774 (NLQHLHITGNKVDVLPKQLFKC), 776-797 (KLRTLNLGQNCIASLPEKISQL), and 799-820 (QLTQLELKGNCLDRLPAQLGQC).

The protein belongs to the LRRC8 family. In terms of assembly, heterohexamer; oligomerizes with other LRRC8 proteins (LRRC8A, LRRC8B, LRRC8C and/or LRRC8E) to form a heterohexamer. In vivo, the subunit composition may depend primarily on expression levels, and heterooligomeric channels containing various proportions of the different LRRC8 proteins may coexist.

Its subcellular location is the cell membrane. The protein localises to the endoplasmic reticulum membrane. It carries out the reaction chloride(in) = chloride(out). The catalysed reaction is iodide(out) = iodide(in). The enzyme catalyses taurine(out) = taurine(in). Its function is as follows. Non-essential component of the volume-regulated anion channel (VRAC, also named VSOAC channel), an anion channel required to maintain a constant cell volume in response to extracellular or intracellular osmotic changes. The VRAC channel conducts iodide better than chloride and can also conduct organic osmolytes like taurine. Plays a redundant role in the efflux of amino acids, such as aspartate, in response to osmotic stress. Channel activity requires LRRC8A plus at least one other family member (LRRC8B, LRRC8C, LRRC8D or LRRC8E); channel characteristics depend on the precise subunit composition. Also acts as a regulator of glucose-sensing in pancreatic beta cells: VRAC currents, generated in response to hypotonicity- or glucose-induced beta cell swelling, depolarize cells, thereby causing electrical excitation, leading to increase glucose sensitivity and insulin secretion. VRAC channels containing LRRC8D inhibit transport of immunoreactive cyclic dinucleotide GMP-AMP (2'-3'-cGAMP), an immune messenger produced in response to DNA virus in the cytosol. This chain is Volume-regulated anion channel subunit LRRC8D, found in Rattus norvegicus (Rat).